Reading from the N-terminus, the 87-residue chain is Ragulator complex protein LAMTOR4 homolog (87 aa).

It belongs to the LAMTOR4 family. As to quaternary structure, part of the Ragulator complex.

It localises to the lysosome. Regulator of the TOR pathway, a signaling cascade that promotes cell growth in response to growth factors, energy levels, and amino acids. As part of the Ragulator complex, may activate the TOR signaling cascade in response to amino acids. The protein is Ragulator complex protein LAMTOR4 homolog of Dictyostelium discoideum (Social amoeba).